A 253-amino-acid polypeptide reads, in one-letter code: Phycoerythrobilin:ferredoxin oxidoreductase (253 aa).

It belongs to the HY2 family.

The catalysed reaction is (3Z)-phycoerythrobilin + oxidized 2[4Fe-4S]-[ferredoxin] = 15,16-dihydrobiliverdin + reduced 2[4Fe-4S]-[ferredoxin] + 2 H(+). Its function is as follows. Catalyzes the two-electron reduction of the C2 and C3(1) diene system of 15,16-dihydrobiliverdin. The protein is Phycoerythrobilin:ferredoxin oxidoreductase (pebB) of Prochlorococcus marinus (strain MIT 9215).